Here is a 296-residue protein sequence, read N- to C-terminus: Probable endonuclease 4 (296 aa).

Zn(2+) is bound by residues His-68, His-109, Glu-144, Asp-178, His-181, His-213, Asp-226, His-228, and Glu-258.

The protein belongs to the AP endonuclease 2 family. It depends on Zn(2+) as a cofactor.

The catalysed reaction is Endonucleolytic cleavage to 5'-phosphooligonucleotide end-products.. In terms of biological role, endonuclease IV plays a role in DNA repair. It cleaves phosphodiester bonds at apurinic or apyrimidinic (AP) sites, generating a 3'-hydroxyl group and a 5'-terminal sugar phosphate. The protein is Probable endonuclease 4 of Staphylococcus aureus (strain Mu3 / ATCC 700698).